We begin with the raw amino-acid sequence, 373 residues long: Probable pectin lyase C (373 aa).

The signal sequence occupies residues 1-18 (MKVPFLQLLCLNAALASA). 2 disulfides stabilise this stretch: cysteine 81-cysteine 100 and cysteine 90-cysteine 220. Asparagine 123 carries an N-linked (GlcNAc...) asparagine glycan. Residue arginine 250 is part of the active site. A disulfide bond links cysteine 316 and cysteine 324.

Belongs to the polysaccharide lyase 1 family.

It localises to the secreted. The enzyme catalyses Eliminative cleavage of (1-&gt;4)-alpha-D-galacturonan methyl ester to give oligosaccharides with 4-deoxy-6-O-methyl-alpha-D-galact-4-enuronosyl groups at their non-reducing ends.. In terms of biological role, pectinolytic enzymes consist of four classes of enzymes: pectin lyase, polygalacturonase, pectin methylesterase and rhamnogalacturonase. Among pectinolytic enzymes, pectin lyase is the most important in depolymerization of pectin, since it cleaves internal glycosidic bonds of highly methylated pectins. The protein is Probable pectin lyase C (pelC) of Aspergillus niger (strain ATCC MYA-4892 / CBS 513.88 / FGSC A1513).